A 304-amino-acid chain; its full sequence is N-acetylmuramic acid 6-phosphate etherase (304 aa).

The 164-residue stretch at 62–225 (IVQAFQNGGR…TTASMVMIGK (164 aa)) folds into the SIS domain. Glu90 (proton donor) is an active-site residue. Glu121 is a catalytic residue.

The protein belongs to the GCKR-like family. MurNAc-6-P etherase subfamily. Homodimer.

The enzyme catalyses N-acetyl-D-muramate 6-phosphate + H2O = N-acetyl-D-glucosamine 6-phosphate + (R)-lactate. The protein operates within amino-sugar metabolism; 1,6-anhydro-N-acetylmuramate degradation. It functions in the pathway amino-sugar metabolism; N-acetylmuramate degradation. Its pathway is cell wall biogenesis; peptidoglycan recycling. Specifically catalyzes the cleavage of the D-lactyl ether substituent of MurNAc 6-phosphate, producing GlcNAc 6-phosphate and D-lactate. Together with AnmK, is also required for the utilization of anhydro-N-acetylmuramic acid (anhMurNAc) either imported from the medium or derived from its own cell wall murein, and thus plays a role in cell wall recycling. The sequence is that of N-acetylmuramic acid 6-phosphate etherase from Actinobacillus pleuropneumoniae serotype 5b (strain L20).